Consider the following 174-residue polypeptide: MTLILGIDPGSRITGYGVVRDTGRGCVYVASGCIRTGAGELPDRLQIVYRGVREVIQTYGPVTMGIEKVFMARNADSALKLGQARGAAIVAGAEEGLEIAEYTATQVKQAVAGTGGANKEQVQMMVMHLLKLTTKPQIDASDALAIAICHAHTRSSLLPHGLGTARSRGGRLRL.

Residues D8, E67, and D139 contribute to the active site. D8, E67, and D139 together coordinate Mg(2+).

The protein belongs to the RuvC family. In terms of assembly, homodimer which binds Holliday junction (HJ) DNA. The HJ becomes 2-fold symmetrical on binding to RuvC with unstacked arms; it has a different conformation from HJ DNA in complex with RuvA. In the full resolvosome a probable DNA-RuvA(4)-RuvB(12)-RuvC(2) complex forms which resolves the HJ. Mg(2+) is required as a cofactor.

The protein localises to the cytoplasm. The enzyme catalyses Endonucleolytic cleavage at a junction such as a reciprocal single-stranded crossover between two homologous DNA duplexes (Holliday junction).. Its function is as follows. The RuvA-RuvB-RuvC complex processes Holliday junction (HJ) DNA during genetic recombination and DNA repair. Endonuclease that resolves HJ intermediates. Cleaves cruciform DNA by making single-stranded nicks across the HJ at symmetrical positions within the homologous arms, yielding a 5'-phosphate and a 3'-hydroxyl group; requires a central core of homology in the junction. The consensus cleavage sequence is 5'-(A/T)TT(C/G)-3'. Cleavage occurs on the 3'-side of the TT dinucleotide at the point of strand exchange. HJ branch migration catalyzed by RuvA-RuvB allows RuvC to scan DNA until it finds its consensus sequence, where it cleaves and resolves the cruciform DNA. In Pseudomonas fluorescens (strain ATCC BAA-477 / NRRL B-23932 / Pf-5), this protein is Crossover junction endodeoxyribonuclease RuvC.